A 321-amino-acid chain; its full sequence is Ribosomal RNA small subunit methyltransferase H (321 aa).

S-adenosyl-L-methionine is bound by residues G29–H31, D48, Y76, D97, and Q104. The segment at L277–S321 is disordered.

It belongs to the methyltransferase superfamily. RsmH family.

Its subcellular location is the cytoplasm. It catalyses the reaction cytidine(1402) in 16S rRNA + S-adenosyl-L-methionine = N(4)-methylcytidine(1402) in 16S rRNA + S-adenosyl-L-homocysteine + H(+). Specifically methylates the N4 position of cytidine in position 1402 (C1402) of 16S rRNA. In Frankia casuarinae (strain DSM 45818 / CECT 9043 / HFP020203 / CcI3), this protein is Ribosomal RNA small subunit methyltransferase H.